Here is a 211-residue protein sequence, read N- to C-terminus: MKVTAAFAGLLVTAFAAPVPEPVLVSRSAGINYVQNYNGNLGDFTYDESAGTFSMYWEDGVSSDFVVGLGWTTGSSNAITYSAEYSASGSSSYLAVYGWVNYPQAEYYIVEDYGDYNPCSSATSLGTVYSDGSTYQVCTDTRTNEPSITGTSTFTQYFSVRESTRTSGTVTVANHFNFWAQHGFGNSDFNYQVMAVEAWSGAGSASVTISS.

The N-terminal stretch at 1 to 27 (MKVTAAFAGLLVTAFAAPVPEPVLVSR) is a signal peptide. Residues 28–210 (SAGINYVQNY…GAGSASVTIS (183 aa)) enclose the GH11 domain. Glu106 serves as the catalytic Nucleophile. Cys119 and Cys138 are oxidised to a cystine. Glu197 (proton donor) is an active-site residue.

Belongs to the glycosyl hydrolase 11 (cellulase G) family.

Its subcellular location is the secreted. The enzyme catalyses Endohydrolysis of (1-&gt;4)-beta-D-xylosidic linkages in xylans.. The protein operates within glycan degradation; xylan degradation. The protein is Endo-1,4-beta-xylanase 3 (xynC) of Aspergillus kawachii (strain NBRC 4308) (White koji mold).